A 279-amino-acid chain; its full sequence is Dermonecrotic toxin LrSicTox-alphaIA1i (279 aa).

His11 is a catalytic residue. Positions 31 and 33 each coordinate Mg(2+). Residue His47 is the Nucleophile of the active site. 2 disulfides stabilise this stretch: Cys51–Cys57 and Cys53–Cys196. A Mg(2+)-binding site is contributed by Asp91. N-linked (GlcNAc...) asparagine glycosylation is present at Asn256.

It belongs to the arthropod phospholipase D family. Class II subfamily. The cofactor is Mg(2+). In terms of tissue distribution, expressed by the venom gland.

Its subcellular location is the secreted. The enzyme catalyses an N-(acyl)-sphingosylphosphocholine = an N-(acyl)-sphingosyl-1,3-cyclic phosphate + choline. The catalysed reaction is an N-(acyl)-sphingosylphosphoethanolamine = an N-(acyl)-sphingosyl-1,3-cyclic phosphate + ethanolamine. It catalyses the reaction a 1-acyl-sn-glycero-3-phosphocholine = a 1-acyl-sn-glycero-2,3-cyclic phosphate + choline. It carries out the reaction a 1-acyl-sn-glycero-3-phosphoethanolamine = a 1-acyl-sn-glycero-2,3-cyclic phosphate + ethanolamine. With respect to regulation, inhibited with low affinity by edelfosine. Its function is as follows. Dermonecrotic toxins cleave the phosphodiester linkage between the phosphate and headgroup of certain phospholipids (sphingolipid and lysolipid substrates), forming an alcohol (often choline) and a cyclic phosphate. This toxin acts on sphingomyelin (SM). It also acts on a broad range of lysophospholipids, like lysophosphatidylinositol (LPI), lysophosphatidylglycerol (LPG), lysophosphatidylethanolamine (LPE), lysobisphosphatidic acid (LBPA), lysophosphatidylserine (LPS) and lysophosphatidylcholines (LPC) of varying chain lengths. The substrate preference is LPI &gt; LPG &gt; LPS &gt; LPC &gt;&gt; LPE, LBPA. Furthermore, the enzyme also act on cyclic phosphatidic acid and lyso-platelet activating factor (LPAF, an alkyl-LPC). The enzyme does not act on sphingosylphosphorylcholine (SPC, also known as lyso-sphingomyelin) and PAF. The toxin may also act on ceramide phosphoethanolamine (CPE). It acts by transphosphatidylation, releasing exclusively cyclic phosphate products as second products. It does not exhibit detectable PLA1/2 activity. It induces dose-dependent hemolysis and dermonecrosis. Also induces increased vascular permeability, edema, inflammatory response, and platelet aggregation. The sequence is that of Dermonecrotic toxin LrSicTox-alphaIA1i from Loxosceles reclusa (Brown recluse spider).